Reading from the N-terminus, the 459-residue chain is Antizyme inhibitor 2 (459 aa).

The segment at 117-140 (QVAQIKYAAKHGVRLLSFDNEVEL) is necessary for polyamine uptake stimulation.

The protein belongs to the Orn/Lys/Arg decarboxylase class-II family. ODC antizyme inhibitor subfamily. As to quaternary structure, monomer. Interacts with OAZ1, OAZ2 and OAZ3; this interaction disrupts the interaction between the antizyme and ODC1. Does not form a heterodimer with ODC1. Post-translationally, ubiquitinated, leading to its proteasomal degradation; a process that is reduced in presence of antizymes. May also be degraded through the lysosomal degradative pathway in a proteasomal-independent manner. As to expression, expressed in the medulla and chromaffin cells of the adrenal gland. Expressed in the Langerhans islets of the pancreas. Expressed in the inner part of the seminiferous tubules and in spermatozoa located in the lumen of the epididymis of the testis. Expressed in the cortex, hippocampus and cerebellum of the brain. Expressed in normal and neoplastic mast cells (MC) (at protein level). Expressed in testis, pancreas and brain. Expressed throughout the differentiation process from spermatids to spermatozoa in the inner part of the seminiferous tubules. Expressed in the kidney: expressed in the superficial (Cs) and the deep layer (Cd) of the cortex region and in the outer stripe (OS), inner stripe (IS) and the inner medulla papilla (IM) of the medulla region.

The protein localises to the nucleus. It is found in the cytoplasm. The protein resides in the perinuclear region. It localises to the membrane. Its subcellular location is the cytoplasmic vesicle. The protein localises to the endoplasmic reticulum-Golgi intermediate compartment. It is found in the golgi apparatus. The protein resides in the cis-Golgi network. It localises to the trans-Golgi network. Its subcellular location is the cytoplasmic granule. The protein localises to the cell projection. It is found in the axon. The protein resides in the dendrite. It localises to the perikaryon. Its function is as follows. Antizyme inhibitor (AZI) protein that positively regulates ornithine decarboxylase (ODC) activity and polyamine uptake. AZI is an enzymatically inactive ODC homolog that counteracts the negative effect of ODC antizymes (AZs) OAZ1, OAZ2 and OAZ3 on ODC activity by competing with ODC for antizyme-binding. Inhibits antizyme-dependent ODC degradation and releases ODC monomers from their inactive complex with antizymes, leading to formation of the catalytically active ODC homodimer and restoring polyamine production. Participates in the morphological integrity of the trans-Golgi network (TGN) and functions as a regulator of intracellular secretory vesicle trafficking. The sequence is that of Antizyme inhibitor 2 (Azin2) from Mus musculus (Mouse).